The following is a 47-amino-acid chain: uncharacterized protein (47 aa).

This is an uncharacterized protein from Bacillus subtilis (strain 168).